The following is a 570-amino-acid chain: Frizzled-2 (570 aa).

A signal peptide spans 1–28; sequence MRARSALPRSALPRLLLPLLLLPAAGPA. The Extracellular portion of the chain corresponds to 29–252; it reads QFHGEKGISI…QEETRFARLW (224 aa). Positions 39-158 constitute an FZ domain; the sequence is PDHGFCQPIS…HGAEQICVGQ (120 aa). 5 disulfides stabilise this stretch: cysteine 44/cysteine 105, cysteine 52/cysteine 98, cysteine 89/cysteine 126, cysteine 115/cysteine 155, and cysteine 119/cysteine 143. N-linked (GlcNAc...) asparagine glycosylation is present at asparagine 58. Asparagine 159 carries an N-linked (GlcNAc...) asparagine glycan. Residues 166-194 are disordered; the sequence is PALLTTAPPSGLQPGAGGTPGGPGGGGSP. Residues 179–193 show a composition bias toward gly residues; sequence PGAGGTPGGPGGGGS. The helical transmembrane segment at 253-273 threads the bilayer; it reads ILTWSVLCCASTFFTVTTYLV. Residues 274 to 284 are Cytoplasmic-facing; the sequence is DMQRFRYPERP. The chain crosses the membrane as a helical span at residues 285–305; sequence IIFLSGCYTMVSVAYIAGFVL. Residues 306 to 332 lie on the Extracellular side of the membrane; that stretch reads QERVVCNERFSEDGYRTVVQGTKKEGC. Residues 333-353 traverse the membrane as a helical segment; the sequence is TILFMMLYFFSMASSIWWVIL. The Cytoplasmic portion of the chain corresponds to 354-375; sequence SLTWFLAAGMKWGHEAIEANSQ. A helical transmembrane segment spans residues 376 to 396; that stretch reads YFHLAAWAVPAVKTITILAMG. Residues 397–419 are Extracellular-facing; it reads QIDGDLLSGVCFVGLNSLDPLRG. Residues 420 to 440 form a helical membrane-spanning segment; the sequence is FVLAPLFVYLFIGTSFLLAGF. The Cytoplasmic portion of the chain corresponds to 441-466; the sequence is VSLFRIRTIMKHDGTKTEKLERLMVR. A helical transmembrane segment spans residues 467–487; that stretch reads IGVFSVLYTVPATIVIACYFY. Residues 488 to 524 are Extracellular-facing; the sequence is EQAFREHWERSWVSQHCKSLAIPCPAHYTPRMSPDFT. Residues 525-545 form a helical membrane-spanning segment; sequence VYMIKYLMTLIVGITSGFWIW. The Cytoplasmic segment spans residues 546 to 570; sequence SGKTLHSWRKFYTRLTNSRHGETTV. Positions 548 to 553 match the Lys-Thr-X-X-X-Trp motif, mediates interaction with the PDZ domain of Dvl family members motif; sequence KTLHSW. The PDZ-binding signature appears at 568–570; sequence TTV.

It belongs to the G-protein coupled receptor Fz/Smo family. Ubiquitinated by ZNRF3, leading to its degradation by the proteasome. In terms of tissue distribution, expressed in embryonic and adult heart, lung, chondrocytes and brain. Also expressed in the developing gastrointestinal tract (strongest in foregut), much weaker expression in the adult. No expression in fetal liver and adult spleen. Up-regulated in esophageal squamous cell carcinomas.

Its subcellular location is the membrane. The protein localises to the cell membrane. Functionally, receptor for Wnt proteins. Most of frizzled receptors are coupled to the beta-catenin canonical signaling pathway, which leads to the activation of disheveled proteins, inhibition of GSK-3 kinase, nuclear accumulation of beta-catenin and activation of Wnt target genes. A second signaling pathway involving PKC and calcium fluxes has been seen for some family members, but it is not yet clear if it represents a distinct pathway or if it can be integrated in the canonical pathway, as PKC seems to be required for Wnt-mediated inactivation of GSK-3 kinase. Both pathways seem to involve interactions with G-proteins. May be involved in transduction and intercellular transmission of polarity information during tissue morphogenesis and/or in differentiated tissues. The chain is Frizzled-2 (Fzd2) from Mus musculus (Mouse).